The sequence spans 148 residues: Large ribosomal subunit protein bL9 (148 aa).

This sequence belongs to the bacterial ribosomal protein bL9 family.

Its function is as follows. Binds to the 23S rRNA. This chain is Large ribosomal subunit protein bL9, found in Desulfitobacterium hafniense (strain DSM 10664 / DCB-2).